The primary structure comprises 410 residues: Mannosyl phosphorylinositol ceramide synthase regulatory protein CSG2 (410 aa).

The signal sequence occupies residues 1 to 17; the sequence is MSTTLLWFSSVIGYVIQ. Topologically, residues 18–50 are lumenal; that stretch reads TKCLSNIQSKKEISVGPNGTIATPETNGDNGNS. N35 and N49 each carry an N-linked (GlcNAc...) asparagine glycan. The chain crosses the membrane as a helical span at residues 51-71; the sequence is SSLTFYLTFMYFASWLLLVPA. Residues 72–141 lie on the Cytoplasmic side of the membrane; the sequence is SRLWEKMRPM…SVATFKYVAK (70 aa). The chain crosses the membrane as a helical span at residues 142-161; it reads LTVLALIMIVADLTYNMALS. The Lumenal segment spans residues 162-167; it reads LSPAFD. The chain crosses the membrane as a helical span at residues 168–187; the sequence is VALMQNTAIFEIVTLLYGVC. Topologically, residues 188–197 are cytoplasmic; the sequence is GISRKNYVFR. A helical transmembrane segment spans residues 198–217; it reads NFLIMMNAVIGILIISYTKA. The Lumenal segment spans residues 218-245; that stretch reads TCDMLAGKLSVNPNTGELSDPFLFDRLK. Residues 246-265 traverse the membrane as a helical segment; it reads GALICGLGALIMGPFAVLWN. Residues 266-285 are Cytoplasmic-facing; sequence RWFCSNISKNENSAVVLVKQ. A helical transmembrane segment spans residues 286–305; sequence STHMALIGIIGMVILLPFIP. At 306 to 324 the chain is on the lumenal side; sequence KFPSRESVESISLFYNDKS. A helical membrane pass occupies residues 325-344; it reads FWFSLLGSIIFGSLPSLISI. At 345–355 the chain is on the cytoplasmic side; sequence LELNRKAPAEY. Residues 356-374 form a helical membrane-spanning segment; it reads LTTCNLGAIIFMGLAEWVC. At 375–385 the chain is on the lumenal side; it reads EPTQTTIVRWE. The chain crosses the membrane as a helical span at residues 386-404; the sequence is VIGYIMLTVSLLVLSVTLG. At 405–410 the chain is on the cytoplasmic side; the sequence is EGKYHH.

In terms of assembly, heterodimer of CSH1 and CSG2, and SUR1 and CSG2.

It localises to the endoplasmic reticulum membrane. Its function is as follows. Required for calcium regulation. May regulate calcium accumulation by a non-vacuole organelle. Also regulates the activity of CSH1 and SUR1 during mannosyl phosphorylinositol ceramide synthesis. This chain is Mannosyl phosphorylinositol ceramide synthase regulatory protein CSG2 (CSG2), found in Saccharomyces cerevisiae (strain ATCC 204508 / S288c) (Baker's yeast).